A 211-amino-acid polypeptide reads, in one-letter code: Uridine kinase (211 aa).

Residue 13–20 (GASASGKS) coordinates ATP.

It belongs to the uridine kinase family.

Its subcellular location is the cytoplasm. It carries out the reaction uridine + ATP = UMP + ADP + H(+). The catalysed reaction is cytidine + ATP = CMP + ADP + H(+). Its pathway is pyrimidine metabolism; CTP biosynthesis via salvage pathway; CTP from cytidine: step 1/3. It functions in the pathway pyrimidine metabolism; UMP biosynthesis via salvage pathway; UMP from uridine: step 1/1. The sequence is that of Uridine kinase from Shewanella pealeana (strain ATCC 700345 / ANG-SQ1).